A 148-amino-acid polypeptide reads, in one-letter code: MTKIKDLMTADLQYCTVLDNVYEAAVKMKDANVGAIPVVDEDGETLVGIVTDRDLVLRGIAIKKPNSQKITDAMTEKPVSVEEDASVDEVLHLMASHQLRRIPVTKNKKLTGIVTLGDLSLSEQTNERAGSALSDISEGDNREEGFFH.

CBS domains follow at residues 8-68 (MTAD…PNSQ) and 74-130 (MTEK…ERAG). The segment at 127–148 (ERAGSALSDISEGDNREEGFFH) is disordered. Residues 139–148 (GDNREEGFFH) are compositionally biased toward basic and acidic residues.

This is an uncharacterized protein from Bacillus subtilis (strain 168).